The sequence spans 1030 residues: uncharacterized protein (1030 aa).

The segment at 51–86 (IKVSFTAKDGELTCKCSCLANVDNCVHIVAVLLKYH) adopts an SWIM-type zinc-finger fold. The region spanning 590–751 (RGLEENKFGG…WSCFDFVLPS (162 aa)) is the Helicase ATP-binding domain. 603–610 (DEMGLGKT) lines the ATP pocket. Residues 702–705 (DEAQ) carry the DEAQ box motif. The Helicase C-terminal domain occupies 867-1021 (ALEIIHEAIE…EDVNFFESLT (155 aa)).

Belongs to the SNF2/RAD54 helicase family.

This is an uncharacterized protein from Mycoplasma pneumoniae (strain ATCC 29342 / M129 / Subtype 1) (Mycoplasmoides pneumoniae).